The sequence spans 274 residues: MRSNNNNPLTRDEILSRYFPQYRPAVAASQGLSGGSCIIAHDTHRIVLRRHHDPDAPPAHFLRHYRALSQLPASLAPRALFYTPGWMAVEYLHGVVNSALPDAEELAALLYHLQQQPRFGWRIALSPLLAQYWSCCDPARRTPFWLRRLKQLQKNGEPRPLRLAPLHMDVHGDNIVLTSAGLRLIDWEYAGDGDIALELAAVWVEDERQHRQLADAYAARARIDARQLWRQIRLWHPWVIMLKAGWFEYRWRQTGEQQFIRLADETWRQLRMKG.

It belongs to the thiamine kinase family.

The catalysed reaction is thiamine + ATP = thiamine phosphate + ADP + H(+). The protein operates within cofactor biosynthesis; thiamine diphosphate biosynthesis; thiamine phosphate from thiamine: step 1/1. Catalyzes the ATP-dependent phosphorylation of thiamine to thiamine phosphate. Is involved in thiamine salvage. The chain is Thiamine kinase from Salmonella gallinarum (strain 287/91 / NCTC 13346).